The following is a 605-amino-acid chain: DNA mismatch repair protein MutL (605 aa).

This sequence belongs to the DNA mismatch repair MutL/HexB family.

Functionally, this protein is involved in the repair of mismatches in DNA. It is required for dam-dependent methyl-directed DNA mismatch repair. May act as a 'molecular matchmaker', a protein that promotes the formation of a stable complex between two or more DNA-binding proteins in an ATP-dependent manner without itself being part of a final effector complex. This is DNA mismatch repair protein MutL from Rhizobium meliloti (strain 1021) (Ensifer meliloti).